The sequence spans 397 residues: Golgi-associated RAB2 interactor protein 2 (397 aa).

Disordered regions lie at residues 1 to 24 and 342 to 397; these read MKKS…PDSK and QTTL…KLLN. 3 stretches are compositionally biased toward basic and acidic residues: residues 10–24, 353–369, and 376–397; these read TRID…PDSK, EKSK…RTMD, and KAEE…KLLN.

It belongs to the GARIN family. Interacts with CALM1.

The protein resides in the cell projection. The protein localises to the cilium. It is found in the flagellum. Seems to play a role in sperm motility. The polypeptide is Golgi-associated RAB2 interactor protein 2 (GARIN2) (Bos taurus (Bovine)).